We begin with the raw amino-acid sequence, 307 residues long: Homoserine kinase (307 aa).

Residue 86–96 (PIARGLGSSAA) participates in ATP binding.

The protein belongs to the GHMP kinase family. Homoserine kinase subfamily.

It is found in the cytoplasm. It catalyses the reaction L-homoserine + ATP = O-phospho-L-homoserine + ADP + H(+). It functions in the pathway amino-acid biosynthesis; L-threonine biosynthesis; L-threonine from L-aspartate: step 4/5. Functionally, catalyzes the ATP-dependent phosphorylation of L-homoserine to L-homoserine phosphate. This Petrotoga mobilis (strain DSM 10674 / SJ95) protein is Homoserine kinase.